The sequence spans 78 residues: Large ribosomal subunit protein eL20 (78 aa).

Belongs to the eukaryotic ribosomal protein eL20 family. In terms of assembly, part of the 50S ribosomal subunit. Binds 23S rRNA.

This Pyrobaculum calidifontis (strain DSM 21063 / JCM 11548 / VA1) protein is Large ribosomal subunit protein eL20.